The chain runs to 23 residues: Aurein-4.4 (23 aa).

It belongs to the frog skin active peptide (FSAP) family. Aurein subfamily. As to expression, expressed by the skin dorsal glands.

Its subcellular location is the secreted. Has no antimicrobial or anticancer activity. This chain is Aurein-4.4, found in Ranoidea aurea (Green and golden bell frog).